Reading from the N-terminus, the 228-residue chain is ATP synthase F(0) complex subunit a (228 aa).

6 helical membrane passes run 13 to 33, 70 to 90, 100 to 120, 140 to 160, 162 to 182, and 190 to 210; these read YFLG…TMFI, WALL…TGLL, LSLN…MGAT, APFL…ALGV, LTAN…ALIN, and LFLT…VSFI.

The protein belongs to the ATPase A chain family. Component of the ATP synthase complex composed at least of ATP5F1A/subunit alpha, ATP5F1B/subunit beta, ATP5MC1/subunit c (homooctomer), MT-ATP6/subunit a, MT-ATP8/subunit 8, ATP5ME/subunit e, ATP5MF/subunit f, ATP5MG/subunit g, ATP5MK/subunit k, ATP5MJ/subunit j, ATP5F1C/subunit gamma, ATP5F1D/subunit delta, ATP5F1E/subunit epsilon, ATP5PF/subunit F6, ATP5PB/subunit b, ATP5PD/subunit d, ATP5PO/subunit OSCP. ATP synthase complex consists of a soluble F(1) head domain (subunits alpha(3) and beta(3)) - the catalytic core - and a membrane F(0) domain - the membrane proton channel (subunits c, a, 8, e, f, g, k and j). These two domains are linked by a central stalk (subunits gamma, delta, and epsilon) rotating inside the F1 region and a stationary peripheral stalk (subunits F6, b, d, and OSCP). Interacts with DNAJC30; interaction is direct.

The protein resides in the mitochondrion inner membrane. The catalysed reaction is H(+)(in) = H(+)(out). In terms of biological role, subunit a, of the mitochondrial membrane ATP synthase complex (F(1)F(0) ATP synthase or Complex V) that produces ATP from ADP in the presence of a proton gradient across the membrane which is generated by electron transport complexes of the respiratory chain. ATP synthase complex consist of a soluble F(1) head domain - the catalytic core - and a membrane F(1) domain - the membrane proton channel. These two domains are linked by a central stalk rotating inside the F(1) region and a stationary peripheral stalk. During catalysis, ATP synthesis in the catalytic domain of F(1) is coupled via a rotary mechanism of the central stalk subunits to proton translocation. With the subunit c (ATP5MC1), forms the proton-conducting channel in the F(0) domain, that contains two crucial half-channels (inlet and outlet) that facilitate proton movement from the mitochondrial intermembrane space (IMS) into the matrix. Protons are taken up via the inlet half-channel and released through the outlet half-channel, following a Grotthuss mechanism. This chain is ATP synthase F(0) complex subunit a, found in Myxine glutinosa (Atlantic hagfish).